We begin with the raw amino-acid sequence, 245 residues long: PF03932 family protein CutC (245 aa).

This sequence belongs to the CutC family.

It localises to the cytoplasm. In Caulobacter vibrioides (strain ATCC 19089 / CIP 103742 / CB 15) (Caulobacter crescentus), this protein is PF03932 family protein CutC.